A 338-amino-acid polypeptide reads, in one-letter code: Glycerol-3-phosphate dehydrogenase [NAD(P)+] (338 aa).

Residues serine 14, tyrosine 15, histidine 35, and lysine 109 each contribute to the NADPH site. Positions 109, 138, and 140 each coordinate sn-glycerol 3-phosphate. Alanine 142 is a binding site for NADPH. Lysine 194, aspartate 247, serine 257, arginine 258, and asparagine 259 together coordinate sn-glycerol 3-phosphate. The active-site Proton acceptor is lysine 194. Arginine 258 is a binding site for NADPH. NADPH is bound by residues valine 282 and glutamate 284.

Belongs to the NAD-dependent glycerol-3-phosphate dehydrogenase family.

The protein localises to the cytoplasm. It carries out the reaction sn-glycerol 3-phosphate + NAD(+) = dihydroxyacetone phosphate + NADH + H(+). The enzyme catalyses sn-glycerol 3-phosphate + NADP(+) = dihydroxyacetone phosphate + NADPH + H(+). The protein operates within membrane lipid metabolism; glycerophospholipid metabolism. Catalyzes the reduction of the glycolytic intermediate dihydroxyacetone phosphate (DHAP) to sn-glycerol 3-phosphate (G3P), the key precursor for phospholipid synthesis. This Shewanella oneidensis (strain ATCC 700550 / JCM 31522 / CIP 106686 / LMG 19005 / NCIMB 14063 / MR-1) protein is Glycerol-3-phosphate dehydrogenase [NAD(P)+].